Here is a 342-residue protein sequence, read N- to C-terminus: Endo-1,4-beta-xylanase A (342 aa).

Residues 11–342 (EMLNLSLAKT…KEALYRILRF (332 aa)) enclose the GH10 domain. Residue glutamate 144 is the Proton donor of the active site. Glutamate 252 acts as the Nucleophile in catalysis.

The protein belongs to the glycosyl hydrolase 10 (cellulase F) family. Cytoplasmic xylanase subfamily.

It localises to the cytoplasm. The enzyme catalyses Endohydrolysis of (1-&gt;4)-beta-D-xylosidic linkages in xylans.. It participates in glycan degradation; xylan degradation. The protein is Endo-1,4-beta-xylanase A (xynA) of Caldicellulosiruptor saccharolyticus (Caldocellum saccharolyticum).